Consider the following 154-residue polypeptide: Transcriptional repressor NrdR (154 aa).

The segment at Cys-3–Cys-34 is a zinc-finger region. The 91-residue stretch at Leu-46–Asp-136 folds into the ATP-cone domain.

It belongs to the NrdR family. Requires Zn(2+) as cofactor.

In terms of biological role, negatively regulates transcription of bacterial ribonucleotide reductase nrd genes and operons by binding to NrdR-boxes. In Mycolicibacterium vanbaalenii (strain DSM 7251 / JCM 13017 / BCRC 16820 / KCTC 9966 / NRRL B-24157 / PYR-1) (Mycobacterium vanbaalenii), this protein is Transcriptional repressor NrdR.